Here is a 277-residue protein sequence, read N- to C-terminus: Sulfate transport system permease protein CysT (277 aa).

7 helical membrane passes run 17–37 (LGTS…ALVM), 64–84 (LLSA…MAWI), 99–119 (LMDL…ASLF), 136–156 (VTYT…PFVV), 185–205 (FCKV…ALSF), 215–235 (VIFI…MIFV), and 243–263 (PAAS…LFSI). Residues 60 to 263 (YKVTLLSAFV…AASLLLLFSI (204 aa)) enclose the ABC transmembrane type-1 domain.

The protein belongs to the binding-protein-dependent transport system permease family. CysTW subfamily. The complex is composed of two ATP-binding proteins (CysA), two transmembrane proteins (CysT and CysW) and a solute-binding protein (CysP).

It localises to the cell inner membrane. Part of the ABC transporter complex CysAWTP (TC 3.A.1.6.1) involved in sulfate/thiosulfate import. Probably responsible for the translocation of the substrate across the membrane. This is Sulfate transport system permease protein CysT (cysU) from Escherichia coli (strain K12).